We begin with the raw amino-acid sequence, 491 residues long: Glycogen synthase 2 (491 aa).

Residue Lys16 participates in ADP-alpha-D-glucose binding.

Belongs to the glycosyltransferase 1 family. Bacterial/plant glycogen synthase subfamily.

The catalysed reaction is [(1-&gt;4)-alpha-D-glucosyl](n) + ADP-alpha-D-glucose = [(1-&gt;4)-alpha-D-glucosyl](n+1) + ADP + H(+). The protein operates within glycan biosynthesis; glycogen biosynthesis. Its function is as follows. Synthesizes alpha-1,4-glucan chains using ADP-glucose. This Nitrosococcus oceani (strain ATCC 19707 / BCRC 17464 / JCM 30415 / NCIMB 11848 / C-107) protein is Glycogen synthase 2.